The chain runs to 1368 residues: DNA-directed RNA polymerase subunit beta (1368 aa).

It belongs to the RNA polymerase beta chain family. As to quaternary structure, the RNAP catalytic core consists of 2 alpha, 1 beta, 1 beta' and 1 omega subunit. When a sigma factor is associated with the core the holoenzyme is formed, which can initiate transcription.

The catalysed reaction is RNA(n) + a ribonucleoside 5'-triphosphate = RNA(n+1) + diphosphate. DNA-dependent RNA polymerase catalyzes the transcription of DNA into RNA using the four ribonucleoside triphosphates as substrates. This Burkholderia pseudomallei (strain K96243) protein is DNA-directed RNA polymerase subunit beta.